Consider the following 1060-residue polypeptide: Valine--tRNA ligase, mitochondrial (1060 aa).

A mitochondrion-targeting transit peptide spans 1–15 (MPHLPLASFRPPLWG). Positions 25 to 50 (PQALCTQPEPHGSPVSRRNREAKQKR) are disordered. Positions 146–156 (PNVTGSLHIGH) match the 'HIGH' region motif. K548 carries the post-translational modification N6-acetyllysine. The short motif at 659–663 (KMSKS) is the 'KMSKS' region element. ATP is bound at residue K662.

Belongs to the class-I aminoacyl-tRNA synthetase family.

The protein resides in the mitochondrion. The catalysed reaction is tRNA(Val) + L-valine + ATP = L-valyl-tRNA(Val) + AMP + diphosphate. Its function is as follows. Catalyzes the attachment of valine to tRNA(Val) in a two-step reaction: valine is first activated by ATP to form Val-AMP and then transferred to the acceptor end of tRNA(Val). This Mus musculus (Mouse) protein is Valine--tRNA ligase, mitochondrial (Vars2).